Reading from the N-terminus, the 204-residue chain is MTENQQLKALLSACHWIGEKGWCPATGGNMSLRLDDQHCLVTESGKDKGSLTETDFLLVETASNHVPSGRTPSAETGLHTLIYRLYPQIGAVLHTHSVNATVLSRVERSDGLVLQGYEMQKSLGGQTTHLDSVVIPIFDNDQDISRLAARVAAHAEATPLQYGFLVRGHGLYCWGRQVAEARRHLEGLEFLFQCELQRRLLEAK.

Residues H94 and H96 each coordinate Zn(2+).

The protein belongs to the aldolase class II family. MtnB subfamily. Zn(2+) is required as a cofactor.

It catalyses the reaction 5-(methylsulfanyl)-D-ribulose 1-phosphate = 5-methylsulfanyl-2,3-dioxopentyl phosphate + H2O. The protein operates within amino-acid biosynthesis; L-methionine biosynthesis via salvage pathway; L-methionine from S-methyl-5-thio-alpha-D-ribose 1-phosphate: step 2/6. Its function is as follows. Catalyzes the dehydration of methylthioribulose-1-phosphate (MTRu-1-P) into 2,3-diketo-5-methylthiopentyl-1-phosphate (DK-MTP-1-P). The protein is Methylthioribulose-1-phosphate dehydratase of Serratia proteamaculans (strain 568).